A 598-amino-acid chain; its full sequence is Beta-myrcene/(E)-beta-ocimene synthase 2, chloroplastic (598 aa).

The N-terminal 30 residues, 1–30, are a transit peptide targeting the chloroplast; sequence MATLCIGSAPIYQNACIHNFRLQRPRRFIS. 5 residues coordinate (2E)-geranyl diphosphate: Arg307, Asp344, Asp348, Arg486, and Asn489. Asp344 and Asp348 together coordinate Mg(2+). Residues 344 to 348 carry the DDXXD motif motif; that stretch reads DDIYD. Mg(2+) contacts are provided by Asn489, Thr493, and Glu497.

It belongs to the terpene synthase family. Tpsb subfamily. It depends on Mg(2+) as a cofactor. Mn(2+) serves as cofactor. Expressed exclusively in mature flowers, but not in inmmature buds.

It localises to the plastid. It is found in the chloroplast. It carries out the reaction (2E)-geranyl diphosphate = beta-myrcene + diphosphate. It participates in secondary metabolite biosynthesis; terpenoid biosynthesis. Its function is as follows. Involved in monoterpene (C10) biosynthesis. The major products are alpha- and beta-pinene, sabinene, beta-myrcene, (E)-beta-ocimene and limonene. This is Beta-myrcene/(E)-beta-ocimene synthase 2, chloroplastic (TPS24) from Arabidopsis thaliana (Mouse-ear cress).